A 231-amino-acid polypeptide reads, in one-letter code: CLAVATA3/ESR (CLE)-related protein 4B-2 (231 aa).

The first 21 residues, 1-21 (MATNTMLCLLILSVVLALAFA), serve as a signal peptide directing secretion. Residues 21 to 83 (ATNKKGDEEP…SNQLPNNNWM (63 aa)) form a required for secretion from the host cytoplasm to the host apoplasm region. An N-linked (GlcNAc...) asparagine glycan is attached at Asn32. Positions 116–231 (RKTGMHSQRH…APAGPDPIHH (116 aa)) are disordered. Composition is skewed to basic and acidic residues over residues 125 to 137 (HHEE…EKRV) and 144 to 221 (PIHH…EKRG). The stretch at 127 to 135 (EETTLEQEK) is one A-1 repeat. Residues 127–219 (EETTLEQEKR…HEETTFEQEK (93 aa)) form a 5 X approximate repeat A region. A CLE-1 repeat occupies 136 to 147 (RVAGAGPDPIHH). The interval 136-231 (RVAGAGPDPI…APAGPDPIHH (96 aa)) is 5 X approximate repeat CLE. The A-2 repeat unit spans residues 148–156 (EETTLEQEK). The stretch at 157-168 (RAVPAGPDPKHH) is one CLE-2 repeat. An A-3 repeat occupies 169-177 (EETTLEQEK). Residues 178–189 (RAVPAGPDPKHH) form a CLE-3 repeat. Residues 190 to 198 (EETTLEQEK) form an A-4 repeat. The stretch at 199-210 (RAVPAGPDPKHH) is one CLE-4 repeat. The A-5 repeat unit spans residues 211 to 219 (EETTFEQEK). One copy of the CLE-5 repeat lies at 220–231 (RGAPAGPDPIHH).

The protein belongs to the CLV3/ESR signal peptide family. As to expression, highly expressed exclusively within the dorsal esophageal gland cell during syncytium formation in host plants.

It is found in the secreted. The protein localises to the host cytoplasm. The protein resides in the host extracellular space. Its subcellular location is the extracellular space. It localises to the apoplast. In terms of biological role, mimics host plant CLE extracellular signal peptides that regulate cell fate. May play a role in the differentiation or division of feeding cells (syncytia) induced in plant roots during infection. The sequence is that of CLAVATA3/ESR (CLE)-related protein 4B-2 (CLE-4B-2) from Globodera rostochiensis (Golden nematode worm).